Here is a 589-residue protein sequence, read N- to C-terminus: uncharacterized protein (589 aa).

Residues 242 to 314 (TALEVRNIPE…RFIKIFWYNP (73 aa)) form the RRM domain. 3 disordered regions span residues 322–348 (PKKFASHKSPTTSDSSNVESSEDVDPA), 443–465 (ESPAASNGSHHPYASGLPQRGTN), and 566–589 (TSMETGESNTSDNMNIEVEEGRWR). Residue serine 330 is modified to Phosphoserine. The segment covering 330-340 (SPTTSDSSNVE) has biased composition (low complexity). Phosphothreonine is present on threonine 332. Position 334 is a phosphoserine (serine 334). Polar residues predominate over residues 566 to 579 (TSMETGESNTSDNM).

It is found in the nucleus. This is an uncharacterized protein from Schizosaccharomyces pombe (strain 972 / ATCC 24843) (Fission yeast).